Consider the following 49-residue polypeptide: Large ribosomal subunit protein bL33 (49 aa).

The protein belongs to the bacterial ribosomal protein bL33 family.

The protein is Large ribosomal subunit protein bL33 of Heliobacterium modesticaldum (strain ATCC 51547 / Ice1).